We begin with the raw amino-acid sequence, 619 residues long: Sorting nexin-41 (619 aa).

The tract at residues 1–95 is disordered; that stretch reads MWNDEDNNPY…ELVPRRKPGG (95 aa). The region spanning 108-224 is the PX domain; that stretch reads PELPILITEA…WRFLDPNSSW (117 aa). The a 1,2-diacyl-sn-glycero-3-phospho-(1D-myo-inositol-3-phosphate) site is built by Arg142, Ser144, Lys168, and Arg191. The disordered stretch occupies residues 444–510; sequence YLSSSQQIQP…GSPSHKKAAS (67 aa). A compositionally biased stretch (basic and acidic residues) spans 454-467; sequence PRREPPAQHRRDGS.

Belongs to the sorting nexin family.

It localises to the endosome membrane. The protein resides in the endomembrane system. Functionally, may be required for cytoplasm to vacuole transport (Cvt) and pexophagy. This Neurospora crassa (strain ATCC 24698 / 74-OR23-1A / CBS 708.71 / DSM 1257 / FGSC 987) protein is Sorting nexin-41 (vsp-6).